We begin with the raw amino-acid sequence, 415 residues long: Serine hydroxymethyltransferase (415 aa).

(6S)-5,6,7,8-tetrahydrofolate-binding positions include L117 and 121 to 123; that span reads GHL. Residue K226 is modified to N6-(pyridoxal phosphate)lysine. (6S)-5,6,7,8-tetrahydrofolate is bound at residue E241.

This sequence belongs to the SHMT family. In terms of assembly, homodimer. Pyridoxal 5'-phosphate serves as cofactor.

It is found in the cytoplasm. The catalysed reaction is (6R)-5,10-methylene-5,6,7,8-tetrahydrofolate + glycine + H2O = (6S)-5,6,7,8-tetrahydrofolate + L-serine. It participates in one-carbon metabolism; tetrahydrofolate interconversion. It functions in the pathway amino-acid biosynthesis; glycine biosynthesis; glycine from L-serine: step 1/1. Functionally, catalyzes the reversible interconversion of serine and glycine with tetrahydrofolate (THF) serving as the one-carbon carrier. This reaction serves as the major source of one-carbon groups required for the biosynthesis of purines, thymidylate, methionine, and other important biomolecules. Also exhibits THF-independent aldolase activity toward beta-hydroxyamino acids, producing glycine and aldehydes, via a retro-aldol mechanism. In Bacillus licheniformis (strain ATCC 14580 / DSM 13 / JCM 2505 / CCUG 7422 / NBRC 12200 / NCIMB 9375 / NCTC 10341 / NRRL NRS-1264 / Gibson 46), this protein is Serine hydroxymethyltransferase.